The chain runs to 266 residues: Glucosamine-6-phosphate deaminase (266 aa).

The active-site Proton acceptor; for enolization step is the Asp72. Asp141 acts as the For ring-opening step in catalysis. The active-site Proton acceptor; for ring-opening step is His143. The active-site For ring-opening step is Glu148.

It belongs to the glucosamine/galactosamine-6-phosphate isomerase family. NagB subfamily. Homohexamer.

The catalysed reaction is alpha-D-glucosamine 6-phosphate + H2O = beta-D-fructose 6-phosphate + NH4(+). The protein operates within amino-sugar metabolism; N-acetylneuraminate degradation; D-fructose 6-phosphate from N-acetylneuraminate: step 5/5. Allosterically activated by N-acetylglucosamine 6-phosphate (GlcNAc6P). Functionally, catalyzes the reversible isomerization-deamination of glucosamine 6-phosphate (GlcN6P) to form fructose 6-phosphate (Fru6P) and ammonium ion. This Edwardsiella ictaluri (strain 93-146) protein is Glucosamine-6-phosphate deaminase.